The sequence spans 362 residues: Uroporphyrinogen decarboxylase (362 aa).

Substrate contacts are provided by residues 39–43 (RQAGR), D88, Y165, T220, and H334.

It belongs to the uroporphyrinogen decarboxylase family. In terms of assembly, homodimer.

The protein localises to the cytoplasm. It carries out the reaction uroporphyrinogen III + 4 H(+) = coproporphyrinogen III + 4 CO2. It participates in porphyrin-containing compound metabolism; protoporphyrin-IX biosynthesis; coproporphyrinogen-III from 5-aminolevulinate: step 4/4. Its function is as follows. Catalyzes the decarboxylation of four acetate groups of uroporphyrinogen-III to yield coproporphyrinogen-III. This chain is Uroporphyrinogen decarboxylase, found in Synechococcus sp. (strain JA-3-3Ab) (Cyanobacteria bacterium Yellowstone A-Prime).